A 61-amino-acid chain; its full sequence is Small ribosomal subunit protein uS14 (61 aa).

Zn(2+) is bound by residues Cys-24, Cys-27, Cys-40, and Cys-43.

This sequence belongs to the universal ribosomal protein uS14 family. Zinc-binding uS14 subfamily. Part of the 30S ribosomal subunit. Contacts proteins S3 and S10. Requires Zn(2+) as cofactor.

Binds 16S rRNA, required for the assembly of 30S particles and may also be responsible for determining the conformation of the 16S rRNA at the A site. The chain is Small ribosomal subunit protein uS14 from Thermosipho melanesiensis (strain DSM 12029 / CIP 104789 / BI429).